We begin with the raw amino-acid sequence, 488 residues long: Glutamyl-tRNA(Gln) amidotransferase subunit A (488 aa).

Catalysis depends on charge relay system residues Lys-76 and Ser-152. Residue Ser-176 is the Acyl-ester intermediate of the active site.

It belongs to the amidase family. GatA subfamily. Heterotrimer of A, B and C subunits.

It carries out the reaction L-glutamyl-tRNA(Gln) + L-glutamine + ATP + H2O = L-glutaminyl-tRNA(Gln) + L-glutamate + ADP + phosphate + H(+). Functionally, allows the formation of correctly charged Gln-tRNA(Gln) through the transamidation of misacylated Glu-tRNA(Gln) in organisms which lack glutaminyl-tRNA synthetase. The reaction takes place in the presence of glutamine and ATP through an activated gamma-phospho-Glu-tRNA(Gln). This Oceanobacillus iheyensis (strain DSM 14371 / CIP 107618 / JCM 11309 / KCTC 3954 / HTE831) protein is Glutamyl-tRNA(Gln) amidotransferase subunit A.